Reading from the N-terminus, the 248-residue chain is 5'-nucleotidase SurE (248 aa).

A divalent metal cation contacts are provided by aspartate 8, aspartate 9, serine 39, and asparagine 91.

This sequence belongs to the SurE nucleotidase family. A divalent metal cation is required as a cofactor.

It is found in the cytoplasm. The catalysed reaction is a ribonucleoside 5'-phosphate + H2O = a ribonucleoside + phosphate. Functionally, nucleotidase that shows phosphatase activity on nucleoside 5'-monophosphates. The protein is 5'-nucleotidase SurE of Marinomonas sp. (strain MWYL1).